Here is a 308-residue protein sequence, read N- to C-terminus: GTP-binding protein RAD (308 aa).

A compositionally biased stretch (gly residues) spans 1 to 15 (MTLNGGSGASGSRGA). Positions 1–86 (MTLNGGSGAS…SDSLSSGGSG (86 aa)) are disordered. The residue at position 24 (arginine 24) is an Omega-N-methylarginine. Position 26 is a phosphoserine (serine 26). The span at 57 to 82 (ATTAAGTRTQGQRLDWPEGSSDSLSS) shows a compositional bias: low complexity. Residues 98–105 (GAPGVGKS) and 203–206 (NKSD) each bind GTP. The segment at 278 to 297 (AKRFLGRIVARNSRKMAFRA) is calmodulin-binding.

It belongs to the small GTPase superfamily. RGK family. In terms of assembly, interacts with Calmodulin preferentially in the inactive, GDP-bound form. Interacts with CAMK2D. Interacts with CACNB2; interaction may be involved in beta-adrenergic regulation of heart rate and contractile force. Interaction with CACNB2 regulates the trafficking of CACNA1C to the cell membrane. Post-translationally, phosphorylation at Ser-26, Ser-39, Ser-273 and Ser-301 may be involved in regulating inhibition of voltage-gated L-type Ca(2+) channels.

It localises to the cell membrane. May regulate basal voltage-dependent L-type Ca(2+) currents and be required for beta-adrenergic augmentation of Ca(2+) influx in cardiomyocytes, thereby regulating increases in heart rate and contractile force. May play an important role in cardiac antiarrhythmia via the strong suppression of voltage-dependent L-type Ca(2+) currents. Regulates voltage-gated L-type calcium channel subunit alpha-1C trafficking to the cell membrane. Inhibits cardiac hypertrophy through the calmodulin-dependent kinase II (CaMKII) pathway. Inhibits phosphorylation and activation of CAMK2D. The chain is GTP-binding protein RAD (Rrad) from Mus musculus (Mouse).